We begin with the raw amino-acid sequence, 412 residues long: Regulator of microtubule dynamics protein 2 (412 aa).

Residues 9–28 (LLLGIMAGTAGISLLVLWYH) form a helical membrane-spanning segment. Phosphoserine is present on serine 51. Residues 72-110 (QLQILEKLNELLTNVEELKEEIKFLKETIPKLEECIQDE) adopt a coiled-coil conformation. Serine 121 is modified (phosphoserine). The segment at 122–153 (PQHRARKKKTTTTTVQRPATSNSSEEAESEGG) is disordered. The residue at position 141 (threonine 141) is a Phosphothreonine. Tyrosine 154 is subject to Phosphotyrosine. A phosphothreonine mark is found at threonine 156 and threonine 159.

The protein belongs to the RMDN family. Interacts with microtubules.

The protein localises to the membrane. It is found in the cytoplasm. It localises to the cytoskeleton. Its subcellular location is the spindle. The protein resides in the spindle pole. The sequence is that of Regulator of microtubule dynamics protein 2 (Rmdn2) from Rattus norvegicus (Rat).